Here is a 616-residue protein sequence, read N- to C-terminus: Probable beta-hexosaminidase ARB_01353 (616 aa).

The signal sequence occupies residues 1–20; sequence MRFAKALAITAVLLSGVVEA. A disordered region spans residues 96–117; the sequence is KFDPFPDQSSKPKEKRQNAPPG. Residue Asn333 is glycosylated (N-linked (GlcNAc...) asparagine). Glu361 acts as the Proton donor in catalysis.

It belongs to the glycosyl hydrolase 20 family.

It is found in the secreted. It catalyses the reaction Hydrolysis of terminal non-reducing N-acetyl-D-hexosamine residues in N-acetyl-beta-D-hexosaminides.. Beta-hexosaminidase that shows a broad substrate specificity. The sequence is that of Probable beta-hexosaminidase ARB_01353 from Arthroderma benhamiae (strain ATCC MYA-4681 / CBS 112371) (Trichophyton mentagrophytes).